We begin with the raw amino-acid sequence, 192 residues long: Ion-translocating oxidoreductase complex subunit A (192 aa).

6 consecutive transmembrane segments (helical) span residues Ile5–Leu25, Ile39–Ile59, Ile63–Val83, Leu102–Leu122, Val134–Leu154, and Ser171–Val191.

It belongs to the NqrDE/RnfAE family. The complex is composed of six subunits: RnfA, RnfB, RnfC, RnfD, RnfE and RnfG.

Its subcellular location is the cell inner membrane. Functionally, part of a membrane-bound complex that couples electron transfer with translocation of ions across the membrane. This chain is Ion-translocating oxidoreductase complex subunit A, found in Pasteurella multocida (strain Pm70).